We begin with the raw amino-acid sequence, 353 residues long: Photosystem II protein D1 (353 aa).

Thr-2 is modified (N-acetylthreonine). Residue Thr-2 is modified to Phosphothreonine. The next 3 membrane-spanning stretches (helical) occupy residues 29-46 (YIGW…TATS), 118-133 (HFLL…EWEL), and 142-156 (WIAV…AATA). His-118 provides a ligand contact to chlorophyll a. Tyr-126 serves as a coordination point for pheophytin a. Residues Asp-170 and Glu-189 each coordinate [CaMn4O5] cluster. Residues 197 to 218 (FHMLGVAGVFGSSLFSAMHGSL) form a helical membrane-spanning segment. Residue His-198 coordinates chlorophyll a. A quinone-binding positions include His-215 and 264 to 265 (SF). Position 215 (His-215) interacts with Fe cation. His-272 provides a ligand contact to Fe cation. A helical membrane pass occupies residues 274 to 288 (FLAAWPVVGIWFTAL). Positions 332, 333, 342, and 344 each coordinate [CaMn4O5] cluster. The propeptide occupies 345 to 353 (AMEAPSVNG).

It belongs to the reaction center PufL/M/PsbA/D family. In terms of assembly, PSII is composed of 1 copy each of membrane proteins PsbA, PsbB, PsbC, PsbD, PsbE, PsbF, PsbH, PsbI, PsbJ, PsbK, PsbL, PsbM, PsbT, PsbX, PsbY, PsbZ, Psb30/Ycf12, at least 3 peripheral proteins of the oxygen-evolving complex and a large number of cofactors. It forms dimeric complexes. The D1/D2 heterodimer binds P680, chlorophylls that are the primary electron donor of PSII, and subsequent electron acceptors. It shares a non-heme iron and each subunit binds pheophytin, quinone, additional chlorophylls, carotenoids and lipids. D1 provides most of the ligands for the Mn4-Ca-O5 cluster of the oxygen-evolving complex (OEC). There is also a Cl(-1) ion associated with D1 and D2, which is required for oxygen evolution. The PSII complex binds additional chlorophylls, carotenoids and specific lipids. serves as cofactor. Post-translationally, tyr-161 forms a radical intermediate that is referred to as redox-active TyrZ, YZ or Y-Z. C-terminally processed by CTPA; processing is essential to allow assembly of the oxygen-evolving complex and thus photosynthetic growth.

The protein resides in the plastid. It is found in the chloroplast thylakoid membrane. The enzyme catalyses 2 a plastoquinone + 4 hnu + 2 H2O = 2 a plastoquinol + O2. In terms of biological role, photosystem II (PSII) is a light-driven water:plastoquinone oxidoreductase that uses light energy to abstract electrons from H(2)O, generating O(2) and a proton gradient subsequently used for ATP formation. It consists of a core antenna complex that captures photons, and an electron transfer chain that converts photonic excitation into a charge separation. The D1/D2 (PsbA/PsbD) reaction center heterodimer binds P680, the primary electron donor of PSII as well as several subsequent electron acceptors. The polypeptide is Photosystem II protein D1 (Vigna unguiculata (Cowpea)).